Consider the following 122-residue polypeptide: Small ribosomal subunit protein uS12 (122 aa).

Residues 1–24 are disordered; that stretch reads MPTINQLIRKKRKSTGKKRTAPAL. The span at 8 to 20 shows a compositional bias: basic residues; sequence IRKKRKSTGKKRT. Asp89 is modified (3-methylthioaspartic acid).

Belongs to the universal ribosomal protein uS12 family. In terms of assembly, part of the 30S ribosomal subunit. Contacts proteins S8 and S17. May interact with IF1 in the 30S initiation complex.

Functionally, with S4 and S5 plays an important role in translational accuracy. Its function is as follows. Interacts with and stabilizes bases of the 16S rRNA that are involved in tRNA selection in the A site and with the mRNA backbone. Located at the interface of the 30S and 50S subunits, it traverses the body of the 30S subunit contacting proteins on the other side and probably holding the rRNA structure together. The combined cluster of proteins S8, S12 and S17 appears to hold together the shoulder and platform of the 30S subunit. This is Small ribosomal subunit protein uS12 from Natranaerobius thermophilus (strain ATCC BAA-1301 / DSM 18059 / JW/NM-WN-LF).